A 326-amino-acid polypeptide reads, in one-letter code: Flotillin-like protein FloA (326 aa).

A run of 2 helical transmembrane segments spans residues 6-26 (IILF…GSSV) and 27-47 (SLWI…IVFM).

This sequence belongs to the flotillin-like FloA family. In terms of assembly, homooligomerizes.

The protein localises to the cell membrane. The protein resides in the membrane raft. Found in functional membrane microdomains (FMM) that may be equivalent to eukaryotic membrane rafts. FMMs are highly dynamic and increase in number as cells age. Flotillins are thought to be important factors in membrane fluidity. This chain is Flotillin-like protein FloA, found in Desulfosudis oleivorans (strain DSM 6200 / JCM 39069 / Hxd3) (Desulfococcus oleovorans).